The sequence spans 821 residues: Enhancer of polycomb-like protein 1 (821 aa).

Positions 1–12 (MSSNGGSNTNER) are enriched in polar residues. Disordered stretches follow at residues 1–43 (MSSN…TRFR), 427–485 (KAAA…QPAM), and 779–799 (QFLQQQQENGSPNNATMPINP). Low complexity-rich tracts occupy residues 18 to 39 (SGSLRSNSNLSSVNGDGSDSGS) and 449 to 465 (EQAAKVKSSKQKNSSSQ). The span at 786-799 (ENGSPNNATMPINP) shows a compositional bias: polar residues.

Belongs to the enhancer of polycomb family. Component of the NuA4 histone acetyltransferase complex.

The protein resides in the nucleus. Functionally, component of the NuA4 histone acetyltransferase complex which is involved in transcriptional activation of selected genes principally by acetylation of nucleosomal histone H4 and H2A. The NuA4 complex is also involved in DNA repair. Involved in gene silencing by neighboring heterochromatin, blockage of the silencing spreading along the chromosome, and required for cell cycle progression through G2/M. This Candida glabrata (strain ATCC 2001 / BCRC 20586 / JCM 3761 / NBRC 0622 / NRRL Y-65 / CBS 138) (Yeast) protein is Enhancer of polycomb-like protein 1 (EPL1).